We begin with the raw amino-acid sequence, 791 residues long: Cellobionic acid phosphorylase (791 aa).

The active-site Proton donor is Asp478.

This sequence belongs to the glycosyl hydrolase 94 family. Cellobionic acid phosphorylase subfamily. Homodimer.

It carries out the reaction 4-O-beta-D-glucopyranosyl-D-gluconate + phosphate = D-gluconate + alpha-D-glucose 1-phosphate. It functions in the pathway glycan metabolism; cellulose degradation. Its function is as follows. Catalyzes the reversible phosphorolysis of cellobionic acid (4-O-beta-D-glucopyranosyl-D-gluconate), a probable step in cellulose degradation. May be part of a metabolic pathway where cellobionic acid is converted into alpha-D-glucose 1-phosphate and D-gluconic acid to enter glycolysis and the pentose phosphate pathway, respectively. Produces 4-O-beta-D-glucopyranosyl-D-glucuronate from alpha-D-glucose 1-phosphate and D-glucuronate with low activity in the synthetic direction. The sequence is that of Cellobionic acid phosphorylase from Neurospora crassa (strain ATCC 24698 / 74-OR23-1A / CBS 708.71 / DSM 1257 / FGSC 987).